Consider the following 933-residue polypeptide: Progesterone receptor (933 aa).

The AF3; mediates transcriptional activation stretch occupies residues 1–164; the sequence is MTELKAKGPR…PATQRVLSPL (164 aa). A disordered region spans residues 1-256; the sequence is MTELKAKGPR…AAAGGGAAAV (256 aa). The tract at residues 1 to 566 is modulating, Pro-Rich; it reads MTELKAKGPR…YSFESLPQKI (566 aa). Residue Ser-20 is modified to Phosphoserine. 2 short sequence motifs (LXXL motif) span residues 55-59 and 115-119; these read LDGLL and LDTLL. 2 positions are modified to phosphoserine: Ser-130 and Ser-162. Positions 165 to 305 are mediates transcriptional transrepression; it reads MSRSGGKAGD…LATTTMDFIH (141 aa). A Nuclear localization signal motif is present at residues 183–187; sequence KVLPR. 2 positions are modified to phosphoserine: Ser-190 and Ser-213. Residues 220 to 231 are compositionally biased toward acidic residues; the sequence is EVEEEDGSESED. The residue at position 294 (Ser-294) is a Phosphoserine; by MAPK1. The interval 332 to 380 is disordered; that stretch reads GAGAASAFAPPRSSPSASSTPVAVGDFPDCAYPPDADPKDDAYPLYGDF. Positions 335 to 350 are enriched in low complexity; it reads AASAFAPPRSSPSASS. Ser-345 carries the post-translational modification Phosphoserine; by MAPK. A Glycyl lysine isopeptide (Lys-Gly) (interchain with G-Cter in SUMO); alternate cross-link involves residue Lys-388. A Glycyl lysine isopeptide (Lys-Gly) (interchain with G-Cter in ubiquitin); alternate cross-link involves residue Lys-388. Position 400 is a phosphoserine; by CDK2 (Ser-400). A disordered region spans residues 415–454; that stretch reads PDFPLGPPPPLPPRAPPSRPGEAAVTAAPASASVSSSSSS. Residues 418-433 show a composition bias toward pro residues; it reads PLGPPPPLPPRAPPSR. The segment covering 434–454 has biased composition (low complexity); it reads PGEAAVTAAPASASVSSSSSS. Positions 456–546 are AF1; mediates transcriptional activation; sequence STLECILYKA…VYPPYLNYLR (91 aa). A Glycyl lysine isopeptide (Lys-Gly) (interchain with G-Cter in SUMO) cross-link involves residue Lys-531. 2 NR C4-type zinc fingers span residues 567–587 and 603–627; these read CLIC…CGSC and CAGR…LRKC. The nuclear receptor DNA-binding region spans 567–639; the sequence is CLICGDEASG…AGMVLGGRKF (73 aa). Ser-676 is subject to Phosphoserine. The region spanning 679-913 is the NR LBD domain; that stretch reads QDIQFFPPLI…EFPEMMSEVI (235 aa). The tract at residues 687–933 is AF2; mediates transcriptional activation; it reads LINLLVSIEP…MVKPLLFHKK (247 aa). A progesterone-binding site is contributed by Arg-766.

The protein belongs to the nuclear hormone receptor family. Interacts with SMARD1 and UNC45A. Interacts with CUEDC2; the interaction promotes ubiquitination, decreases sumoylation, and represses transcriptional activity. Interacts with PIAS3; the interaction promotes sumoylation of PR in a hormone-dependent manner, inhibits DNA-binding, and alters nuclear export. Interacts with SP1; the interaction requires ligand-induced phosphorylation on Ser-345 by ERK1/2-MAPK. Interacts with PRMT2. Interacts with NCOA2 and NCOA1. Interacts with KLF9. Interacts with GTF2B. Phosphorylated on multiple serine sites. Several of these sites are hormone-dependent. Phosphorylation on Ser-294 is highly hormone-dependent and modulates ubiquitination and sumoylation on Lys-388. Phosphorylation on Ser-345 also requires induction by hormone. Basal phosphorylation on Ser-162, Ser-190 and Ser-400 is increased in response to progesterone and can be phosphorylated in vitro by the CDK2-A1 complex. Increased levels of phosphorylation on Ser-400 also in the presence of EGF, heregulin, IGF, PMA and FBS. Phosphorylation at this site by CDK2 is ligand-independent, and increases nuclear translocation and transcriptional activity. Phosphorylation at Ser-162 and Ser-294, but not at Ser-190, is impaired during the G(2)/M phase of the cell cycle. Phosphorylation on Ser-345 by ERK1/2 MAPK is required for interaction with SP1. In terms of processing, sumoylation is hormone-dependent and represses transcriptional activity. Sumoylation on all three sites is enhanced by PIAS3. Desumoylated by SENP1. Sumoylation on Lys-388, the main site of sumoylation, is repressed by ubiquitination on the same site, and modulated by phosphorylation at Ser-294. Post-translationally, ubiquitination is hormone-dependent and represses sumoylation on the same site. Promoted by MAPK-mediated phosphorylation on Ser-294. Ubiquitinated by UBR5, leading to its degradation: UBR5 specifically recognizes and binds ligand-bound PGR when it is not associated with coactivators (NCOAs). In presence of NCOAs, the UBR5-degron is not accessible, preventing its ubiquitination and degradation. Palmitoylated by ZDHHC7 and ZDHHC21. Palmitoylation is required for plasma membrane targeting and for rapid intracellular signaling via ERK and AKT kinases and cAMP generation.

Its subcellular location is the nucleus. The protein resides in the cytoplasm. Its function is as follows. The steroid hormones and their receptors are involved in the regulation of eukaryotic gene expression and affect cellular proliferation and differentiation in target tissues. Transcriptional activator of several progesteron-dependent promoters in a variety of cell types. Involved in activation of SRC-dependent MAPK signaling on hormone stimulation. This is Progesterone receptor (PGR) from Chlorocebus aethiops (Green monkey).